Consider the following 141-residue polypeptide: Hemoglobin subunit alpha (141 aa).

Residues 1–141 (VLSSADKNNV…VSTVLTSKYR (141 aa)) enclose the Globin domain. The residue at position 3 (Ser3) is a Phosphoserine. 2 positions are modified to N6-succinyllysine: Lys7 and Lys11. Lys16 carries the N6-acetyllysine; alternate modification. Residue Lys16 is modified to N6-succinyllysine; alternate. Tyr24 is modified (phosphotyrosine). Residue Ser35 is modified to Phosphoserine. Lys40 carries the post-translational modification N6-succinyllysine. At Ser49 the chain carries Phosphoserine. His58 is an O2 binding site. His87 is a heme b binding site. Residue Ser102 is modified to Phosphoserine. Phosphothreonine is present on Thr108. Ser124 carries the phosphoserine modification. Phosphothreonine is present on residues Thr134 and Thr137. The residue at position 138 (Ser138) is a Phosphoserine.

The protein belongs to the globin family. In terms of assembly, heterotetramer of two alpha chains and two beta chains. In terms of tissue distribution, red blood cells.

Its function is as follows. Involved in oxygen transport from the lung to the various peripheral tissues. Functionally, hemopressin acts as an antagonist peptide of the cannabinoid receptor CNR1. Hemopressin-binding efficiently blocks cannabinoid receptor CNR1 and subsequent signaling. This chain is Hemoglobin subunit alpha (HBA), found in Panthera tigris sumatrae (Sumatran tiger).